Here is a 263-residue protein sequence, read N- to C-terminus: 3-methyl-2-oxobutanoate hydroxymethyltransferase (263 aa).

Mg(2+) contacts are provided by D45 and D84. Residues 45–46 (DS), D84, and K112 each bind 3-methyl-2-oxobutanoate. Position 114 (E114) interacts with Mg(2+). The active-site Proton acceptor is the E181.

This sequence belongs to the PanB family. As to quaternary structure, homodecamer; pentamer of dimers. The cofactor is Mg(2+).

The protein resides in the cytoplasm. The enzyme catalyses 3-methyl-2-oxobutanoate + (6R)-5,10-methylene-5,6,7,8-tetrahydrofolate + H2O = 2-dehydropantoate + (6S)-5,6,7,8-tetrahydrofolate. Its pathway is cofactor biosynthesis; (R)-pantothenate biosynthesis; (R)-pantoate from 3-methyl-2-oxobutanoate: step 1/2. In terms of biological role, catalyzes the reversible reaction in which hydroxymethyl group from 5,10-methylenetetrahydrofolate is transferred onto alpha-ketoisovalerate to form ketopantoate. The polypeptide is 3-methyl-2-oxobutanoate hydroxymethyltransferase (Proteus mirabilis (strain HI4320)).